The chain runs to 240 residues: Aliphatic sulfonates import ATP-binding protein SsuB (240 aa).

Positions 6 to 227 (IQLSKLRKNF…VKDRHFACFE (222 aa)) constitute an ABC transporter domain. An ATP-binding site is contributed by 38–45 (GESGCGKS).

Belongs to the ABC transporter superfamily. Aliphatic sulfonates importer (TC 3.A.1.17.2) family. As to quaternary structure, the complex is composed of two ATP-binding proteins (SsuB), two transmembrane proteins (SsuC) and a solute-binding protein (SsuA).

It is found in the cell inner membrane. The enzyme catalyses ATP + H2O + aliphatic sulfonate-[sulfonate-binding protein]Side 1 = ADP + phosphate + aliphatic sulfonateSide 2 + [sulfonate-binding protein]Side 1.. In terms of biological role, part of the ABC transporter complex SsuABC involved in aliphatic sulfonates import. Responsible for energy coupling to the transport system. The protein is Aliphatic sulfonates import ATP-binding protein SsuB of Zymomonas mobilis subsp. mobilis (strain ATCC 31821 / ZM4 / CP4).